A 364-amino-acid chain; its full sequence is Transcriptional regulator ICP22 homolog (364 aa).

2 disordered regions span residues 1–73 (MDRV…HGAR) and 173–364 (VIEG…AAAP). The span at 12–46 (VPSPPFSPVDPPGPRPTTPVPGSSPPSPASTPTPP) shows a compositional bias: pro residues. Composition is skewed to acidic residues over residues 181–191 (EECDVDEDDAG), 207–286 (CEDD…DGSD), and 294–343 (DGGD…GEGE). The segment covering 355-364 (RAPTRPAAAP) has biased composition (low complexity).

It belongs to the herpesviridae ICP22 family.

The sequence is that of Transcriptional regulator ICP22 homolog (RSP40) from Sus scrofa (Pig).